Consider the following 183-residue polypeptide: Small ribosomal subunit protein uS4 (183 aa).

In terms of domain architecture, S4 RNA-binding spans 106 to 168 (RRLQTQVYRQ…AGSPLAREGH (63 aa)).

Belongs to the universal ribosomal protein uS4 family. Part of the 30S ribosomal subunit. Contacts protein S5. The interaction surface between S4 and S5 is involved in control of translational fidelity.

Its function is as follows. One of the primary rRNA binding proteins, it binds directly to 16S rRNA where it nucleates assembly of the body of the 30S subunit. With S5 and S12 plays an important role in translational accuracy. In Methanothrix thermoacetophila (strain DSM 6194 / JCM 14653 / NBRC 101360 / PT) (Methanosaeta thermophila), this protein is Small ribosomal subunit protein uS4.